A 173-amino-acid chain; its full sequence is Methylated-DNA--protein-cysteine methyltransferase (173 aa).

Cys-143 (nucleophile; methyl group acceptor) is an active-site residue.

Belongs to the MGMT family.

The protein localises to the cytoplasm. The enzyme catalyses a 6-O-methyl-2'-deoxyguanosine in DNA + L-cysteinyl-[protein] = S-methyl-L-cysteinyl-[protein] + a 2'-deoxyguanosine in DNA. It carries out the reaction a 4-O-methyl-thymidine in DNA + L-cysteinyl-[protein] = a thymidine in DNA + S-methyl-L-cysteinyl-[protein]. Its function is as follows. Involved in the cellular defense against the biological effects of O6-methylguanine (O6-MeG) and O4-methylthymine (O4-MeT) in DNA. Repairs the methylated nucleobase in DNA by stoichiometrically transferring the methyl group to a cysteine residue in the enzyme. This is a suicide reaction: the enzyme is irreversibly inactivated. This is Methylated-DNA--protein-cysteine methyltransferase from Pyrococcus sp. (strain NA2).